The chain runs to 228 residues: Probable U3 small nucleolar RNA-associated protein 11 (228 aa).

2 disordered regions span residues 1-23 (MSSLRNAIPRPAHKERSQPEARK) and 192-211 (SMQKELQKKGRKRKLRDDEL). The span at 12–23 (AHKERSQPEARK) shows a compositional bias: basic and acidic residues.

It belongs to the UTP11 family. In terms of assembly, component of the ribosomal small subunit (SSU) processome.

The protein localises to the nucleus. It localises to the nucleolus. Involved in nucleolar processing of pre-18S ribosomal RNA. This is Probable U3 small nucleolar RNA-associated protein 11 from Arabidopsis thaliana (Mouse-ear cress).